Reading from the N-terminus, the 271-residue chain is 2-aminophenol 1,6-dioxygenase alpha subunit (271 aa).

Belongs to the LigB/MhpB extradiol dioxygenase family. Heterotetramer of 2 alpha and 2 beta subunits.

In terms of biological role, component of the 2-aminophenol 1,6-dioxygenase complex that catalyzes the ring fission of 2-aminophenol to produce 2-aminomuconic 6-semialdehyde. AmnA seems to have a role in the stability of the complex. The polypeptide is 2-aminophenol 1,6-dioxygenase alpha subunit (amnA) (Pseudomonas sp).